The chain runs to 643 residues: Transmembrane 9 superfamily member 4 (643 aa).

The first 23 residues, 1 to 23 (MAAAMIWWPRFLLLLCLTCKGST), serve as a signal peptide directing secretion. At 24–282 (FYVPGVAPIN…TMSDVQIHWF (259 aa)) the chain is on the extracellular side. Residues 283 to 303 (SIINSVVVVFFLSGILSMIII) traverse the membrane as a helical segment. Residues 304–347 (RTLRKDIANYNKEDDIEDTMEESGWKLVHGDVFRPPQYPMILSS) lie on the Cytoplasmic side of the membrane. Residue tyrosine 313 is modified to Phosphotyrosine. The chain crosses the membrane as a helical span at residues 348 to 368 (LLGSGIQLFCMILIVIFVAML). Over 369–377 (GMLSPSSRG) the chain is Extracellular. A helical transmembrane segment spans residues 378 to 398 (ALMTTACFLFMFMGVFGGFSA). Topologically, residues 399–417 (GRLYRTLKGHRWKKGAFCT) are cytoplasmic. Residues 418 to 438 (ATLYPGVVFGICFVLNCFIWG) traverse the membrane as a helical segment. The Extracellular segment spans residues 439 to 450 (KHSSGAVPFPTM). The helical transmembrane segment at 451–471 (VALLCMWFGISLPLVYLGYYF) threads the bilayer. Residues 472-502 (GFRKQPYDNPVRTNQIPRQIPEQRWYMNRFV) are Cytoplasmic-facing. The chain crosses the membrane as a helical span at residues 503–523 (GILMAGILPFGAMFIELFFIF). Topologically, residues 524-536 (SAIWENQFYYLFG) are extracellular. Residues 537–557 (FLFLVFIILVVSCSQISIVMV) traverse the membrane as a helical segment. The Cytoplasmic portion of the chain corresponds to 558–571 (YFQLCAEDYRWWWR). The chain crosses the membrane as a helical span at residues 572–592 (NFLVSGGSAFYVLVYAIFYFV). At 593–599 (NKLDIVE) the chain is on the extracellular side. A helical membrane pass occupies residues 600–620 (FIPSLLYFGYTTLMVLSFWLL). The Cytoplasmic segment spans residues 621–643 (TGTIGFYAAYMFVRKIYAAVKID).

This sequence belongs to the nonaspanin (TM9SF) (TC 9.A.2) family.

It localises to the membrane. The protein resides in the golgi apparatus. Its subcellular location is the early endosome. Associates with proteins harboring glycine-rich transmembrane domains and ensures their efficient localization to the cell surface. This Rattus norvegicus (Rat) protein is Transmembrane 9 superfamily member 4 (Tm9sf4).